Here is a 473-residue protein sequence, read N- to C-terminus: Adenosylhomocysteinase (473 aa).

Positions 64, 139, and 199 each coordinate substrate. 200–202 (TTT) contacts NAD(+). Positions 229 and 233 each coordinate substrate. NAD(+) contacts are provided by residues asparagine 234, 263-268 (GYGDVG), glutamate 286, asparagine 321, 342-344 (IGH), and asparagine 387.

This sequence belongs to the adenosylhomocysteinase family. Requires NAD(+) as cofactor.

It localises to the cytoplasm. It carries out the reaction S-adenosyl-L-homocysteine + H2O = L-homocysteine + adenosine. Its pathway is amino-acid biosynthesis; L-homocysteine biosynthesis; L-homocysteine from S-adenosyl-L-homocysteine: step 1/1. Functionally, may play a key role in the regulation of the intracellular concentration of adenosylhomocysteine. This is Adenosylhomocysteinase from Paraburkholderia phymatum (strain DSM 17167 / CIP 108236 / LMG 21445 / STM815) (Burkholderia phymatum).